Reading from the N-terminus, the 361-residue chain is Methylthioribose-1-phosphate isomerase (361 aa).

The active-site Proton donor is aspartate 245.

This sequence belongs to the eIF-2B alpha/beta/delta subunits family. MtnA subfamily.

Its subcellular location is the cytoplasm. It localises to the nucleus. The enzyme catalyses 5-(methylsulfanyl)-alpha-D-ribose 1-phosphate = 5-(methylsulfanyl)-D-ribulose 1-phosphate. It functions in the pathway amino-acid biosynthesis; L-methionine biosynthesis via salvage pathway; L-methionine from S-methyl-5-thio-alpha-D-ribose 1-phosphate: step 1/6. Catalyzes the interconversion of methylthioribose-1-phosphate (MTR-1-P) into methylthioribulose-1-phosphate (MTRu-1-P). This is Methylthioribose-1-phosphate isomerase from Monosiga brevicollis (Choanoflagellate).